A 468-amino-acid polypeptide reads, in one-letter code: Peripherin (468 aa).

The segment covering 1 to 16 (MSHHSSGLRSSISSTS) has biased composition (low complexity). The tract at residues 1–22 (MSHHSSGLRSSISSTSYRRTFG) is disordered. Positions 1–96 (MSHHSSGLRS…FLATRSNEKQ (96 aa)) are head. Y17 bears the 3'-nitrotyrosine mark. A phosphoserine mark is found at S28, S50, and S59. The IF rod domain maps to 94 to 404 (EKQELQELND…KLLEGEESRI (311 aa)). Positions 97–129 (ELQELNDRFANFIEKVRFLEQQNAALRGELSQA) are coil 1A. The interval 130–140 (RGQEPARADQL) is linker 1. The segment at 141–236 (CQQELRELRR…KLHEEELRDL (96 aa)) is coil 1B. Residues 237 to 259 (QVSVESQQVQQVEVEATVKPELT) form a linker 2 region. The segment at 260 to 402 (AALRDIRAQY…YRKLLEGEES (143 aa)) is coil 2. Position 376 is a 3'-nitrotyrosine (Y376). Residues 403–468 (RISVPVHSFA…ELDKSSIHSY (66 aa)) are tail. Residues 445 to 468 (GEKVVTESQKEQHSELDKSSIHSY) form a disordered region. Y468 is subject to Phosphotyrosine.

This sequence belongs to the intermediate filament family. In terms of assembly, forms homodimers (in vitro). Homopolymerizes into a filamentous network (in vitro). Forms heterodimers with NEFL, NEFM or NEFH (in vitro). Interacts with DST (via C-terminus). Interacts with RAB7A; the interaction is direct. Interacts with PRKCE (via phorbol-ester/DAG-type 2 domain). Phosphorylated; phosphorylation increases after nerve injury in regenerating neurons. In terms of tissue distribution, expressed in hypoglossal motor neurons (at protein level). Expressed in the small and large sensory neurons of the dorsal root ganglion (at protein level). Expressed in cutaneous and muscular sensory neurons.

Its subcellular location is the cytoplasm. It localises to the cytoskeleton. The protein localises to the cell projection. It is found in the axon. The protein resides in the perikaryon. Its function is as follows. Class-III neuronal intermediate filament protein. My form an independent structural network without the involvement of other neurofilaments or may cooperate with the neuronal intermediate filament proteins NEFL, NEFH, NEFM and INA to form a filamentous network. Assembly of the neuronal intermediate filaments may be regulated by RAB7A. Plays a role in the development of unmyelinated sensory neurons. May be involved in axon elongation and axon regeneration after injury. Inhibits neurite extension in type II spiral ganglion neurons in the cochlea. The sequence is that of Peripherin (Prph) from Rattus norvegicus (Rat).